The following is a 447-amino-acid chain: Methylenetetrahydrofolate--tRNA-(uracil-5-)-methyltransferase TrmFO (447 aa).

FAD is bound at residue 10-15 (GAGLAG).

The protein belongs to the MnmG family. TrmFO subfamily. The cofactor is FAD.

It localises to the cytoplasm. The catalysed reaction is uridine(54) in tRNA + (6R)-5,10-methylene-5,6,7,8-tetrahydrofolate + NADH + H(+) = 5-methyluridine(54) in tRNA + (6S)-5,6,7,8-tetrahydrofolate + NAD(+). It catalyses the reaction uridine(54) in tRNA + (6R)-5,10-methylene-5,6,7,8-tetrahydrofolate + NADPH + H(+) = 5-methyluridine(54) in tRNA + (6S)-5,6,7,8-tetrahydrofolate + NADP(+). Its function is as follows. Catalyzes the folate-dependent formation of 5-methyl-uridine at position 54 (M-5-U54) in all tRNAs. In Symbiobacterium thermophilum (strain DSM 24528 / JCM 14929 / IAM 14863 / T), this protein is Methylenetetrahydrofolate--tRNA-(uracil-5-)-methyltransferase TrmFO.